Here is a 454-residue protein sequence, read N- to C-terminus: Putative flavin-containing monoamine oxidase AofH (454 aa).

It belongs to the flavin monoamine oxidase family. The cofactor is FAD.

The polypeptide is Putative flavin-containing monoamine oxidase AofH (aofH) (Mycobacterium tuberculosis (strain CDC 1551 / Oshkosh)).